The primary structure comprises 82 residues: Penaeidin-3a (82 aa).

The signal sequence occupies residues 1 to 19; sequence MRLVVCLVFLASFALVCQG. A Pyrrolidone carboxylic acid modification is found at Gln20. 3 disulfides stabilise this stretch: Cys51/Cys66, Cys55/Cys73, and Cys67/Cys74. Ser81 is subject to Serine amide.

Post-translationally, the N-terminus forms pyrrolidone carboxylic acid. Higher expression in hemocytes and to a lesser extent in heart, testis, gills, intestine, lymphoid organ and hepatopancreas. Traces in eyes and subcuticular epithelium. Not present in the brain.

It is found in the cytoplasmic granule. Functionally, antibacterial activity against M.luteus and E.coli bacteria. Antifungal activity against N.crassa and F.oxysporum. Presents chitin-binding activity. The chain is Penaeidin-3a from Penaeus vannamei (Whiteleg shrimp).